We begin with the raw amino-acid sequence, 537 residues long: MRKSSIRRRATAFGTAGALVTATLIAGAVSAPAASAAPADGHGHGRSWDREARGAAIAAARAARAGIDWEDCAADWNLPKPIQCGYVTVPMDYAKPYGKQIRLAVDRIGNTGTRSERQGALIYNPGGPGGSGLRFPARVTNKSAVWANTAKAYDFVGFDPRGVGHSAPISCVDPQEFVKAPKADPVPGSEADKRAQRKLAREYAEGCFERSGEMLPHMTTPNTARDLDVIRAALGEKKLNYLGVSYGTYLGAVYGTLFPDHVRRMVVDSVVNPSRDKIWYQANLDQDVAFEGRWKDWQDWVAANDAAYHLGDTRAEVQDQWLKLRAAAAKKPLGGVVGPAELISFFQSAPYYDSAWAPTAEIFSKYVAGDTQALVDAAAPDLSDTAGNASAENGNAVYTAVECTDAKWPANWRTWDRDNTRLHRDHPFMTWANAWMNLPCATWPVKQQTPLNVKTGKGLPPVLIVQSERDAATPYEGAVELHQRFRGSRLITERDAGSHGVTGLVNPCINDRVDTYLLTGRTDARDVTCAPHATPRP.

The first 36 residues, 1–36, serve as a signal peptide directing secretion; sequence MRKSSIRRRATAFGTAGALVTATLIAGAVSAPAASA. The propeptide occupies 37–39; the sequence is APA. Residues 119–497 enclose the AB hydrolase-1 domain; that stretch reads GALIYNPGGP…SRLITERDAG (379 aa). The active-site Nucleophile is Ser-245. The active site involves Asp-470. His-499 serves as the catalytic Proton donor.

It belongs to the peptidase S33 family.

It is found in the secreted. In terms of biological role, cleaves tripeptides from the N-termini of proteins. Does not cleave mono- or dipeptides, or N-terminally blocked peptides. The chain is Tripeptidyl aminopeptidase from Streptomyces lividans.